Reading from the N-terminus, the 329-residue chain is Sideroflexin-1.1 (329 aa).

The next 5 membrane-spanning stretches (helical) occupy residues 100 to 122 (MPGN…GVVF), 150 to 167 (LFVS…VALG), 178 to 198 (LAAR…NIPM), 232 to 254 (VTLS…MNRI), and 274 to 294 (IQTL…CALF).

The protein belongs to the sideroflexin family.

The protein resides in the mitochondrion inner membrane. It catalyses the reaction L-serine(in) = L-serine(out). The enzyme catalyses L-alanine(in) = L-alanine(out). It carries out the reaction L-cysteine(in) = L-cysteine(out). Its function is as follows. Amino acid transporter importing serine, an essential substrate of the mitochondrial branch of the one-carbon pathway, into mitochondria. Mitochondrial serine is then converted to glycine and formate, which exits to the cytosol where it is used to generate the charged folates that serve as one-carbon donors. May also transport other amino acids including alanine and cysteine. The sequence is that of Sideroflexin-1.1 from Caenorhabditis elegans.